The following is a 181-amino-acid chain: Terminase small subunit (181 aa).

A winged helix-turn-helix (wHTH) region spans residues 1 to 29 (MEVNKKQLADIFGASIRTIQNWQEQGMPV). 31–36 (RGGGKG) contacts ATP. The stretch at 52-109 (ERDAEIENEKLRREVEELRQASEADLQPGTIEYERHRLTRAQADAQELKNARDSAEVV) forms a coiled coil. Positions 110–140 (ETAFCTFVLSRIAGEIASILDGLPLSVQRRF) are self-assembly. Positions 141–180 (PELENRHVDFLKRDIIKAMNKAAALDELIPGLLSEYIEQS) are binding to terminase large subunit.

This sequence belongs to the terminase small subunit family. In terms of assembly, homodimer. Heterotrimer of two small and one large terminase subunits. The catalytically competent terminase is composed of a tetramer of heterotrimers. The tetramer forms a ring structure large enough to encircle duplex DNA. Host IHFA/IHFB induces bending of viral DNA to facilitate the assembly of the terminase tetramer of heterotrimers. Interacts (via C-terminus) with the terminase large subunit (via N-terminus).

Its subcellular location is the host cytoplasm. The enzyme catalyses ATP + H2O = ADP + phosphate + H(+). The small subunit is responsible for the binding to multiple recognition elements within the packaging initiation site cos. The terminase lies at a unique vertex of the procapsid and is composed of two subunits, a small terminase subunit involved in viral DNA recognition (binding to packaging sequence cos), and a large terminase subunit possessing endonucleolytic and ATPase activities (DNA maturation and packaging). The terminase binds, cooperatively with the host factor IHFA/IHFB, to the cos site at the junction of adjacent viral genomes in the concatemeric DNA. The endonuclease activity of the large subunit cleave the viral DNA generating 5'overhangs of 12 bp in length. The terminase remains bound to the left end of the genome to be packaged, forming a stable DNA-terminase complex. In a reaction facilitated by the viral assembly catalyst gpFI, the DNA-terminase complex binds to the portal of the procapsid and the terminase packages the viral DNA into the procapsid until the next cos site on the concatemer reaches the complex ('unit length' packaging). The downstream cos site is then cut generating the mature right end of the genome, the heterotrimer undocks from the DNA-filled head and remains bound to the left end of concatemer's next genome. This Escherichia phage lambda (Bacteriophage lambda) protein is Terminase small subunit (Nu1).